Consider the following 119-residue polypeptide: Large ribosomal subunit protein uL18 (119 aa).

It belongs to the universal ribosomal protein uL18 family. Part of the 50S ribosomal subunit; part of the 5S rRNA/L5/L18/L25 subcomplex. Contacts the 5S and 23S rRNAs.

Functionally, this is one of the proteins that bind and probably mediate the attachment of the 5S RNA into the large ribosomal subunit, where it forms part of the central protuberance. In Oceanobacillus iheyensis (strain DSM 14371 / CIP 107618 / JCM 11309 / KCTC 3954 / HTE831), this protein is Large ribosomal subunit protein uL18.